Consider the following 297-residue polypeptide: MQIRRRPPNPAVEMGTLRYEVSVPESKPKNILEEIVWHKEKEVDYLRDKEPLVELRKKINLMPPPLDFLTTLSTGKTQLAVIAEVKKASPSKGVIRQDFEPVAIAKLYQENAATCISVLTDRKFFQGSFENLANIRENVDLPLLCKDFLIYPYQIYFARLYGADAVLLIAAILSDQDLKYFIKIVNSLGMTALVEVHTLKELDRVLGIEGVKLIGINNRNLEDFSVDLQTTFQLMEARKKELEKLGILVVSESGIHSYEDINFMINAGVNAVLVGESLVKKTNPGTALLQLFNENKS.

The protein belongs to the TrpC family.

The enzyme catalyses 1-(2-carboxyphenylamino)-1-deoxy-D-ribulose 5-phosphate + H(+) = (1S,2R)-1-C-(indol-3-yl)glycerol 3-phosphate + CO2 + H2O. It participates in amino-acid biosynthesis; L-tryptophan biosynthesis; L-tryptophan from chorismate: step 4/5. The protein is Indole-3-glycerol phosphate synthase of Trichodesmium erythraeum (strain IMS101).